Here is a 232-residue protein sequence, read N- to C-terminus: Small ribosomal subunit protein uS3 (232 aa).

One can recognise a KH type-2 domain in the interval Val-39–Arg-107.

It belongs to the universal ribosomal protein uS3 family. Part of the 30S ribosomal subunit. Forms a tight complex with proteins S10 and S14.

Functionally, binds the lower part of the 30S subunit head. Binds mRNA in the 70S ribosome, positioning it for translation. The polypeptide is Small ribosomal subunit protein uS3 (Aliivibrio salmonicida (strain LFI1238) (Vibrio salmonicida (strain LFI1238))).